A 534-amino-acid polypeptide reads, in one-letter code: Dual specificity calcium/calmodulin-dependent 3',5'-cyclic nucleotide phosphodiesterase 1B (534 aa).

Residues 1–21 (MELSPRSPPEMLESDCPSPLE) are disordered. 2 positions are modified to phosphoserine: Ser-7 and Ser-14. 2 calmodulin-binding regions span residues 27 to 47 (SKKM…QLEN) and 116 to 139 (EKPK…MFRR). Residues 144–501 (VGPTYSTAVL…QKWKERAASG (358 aa)) enclose the PDEase domain. The Proton donor role is filled by His-221. Positions 225, 261, 262, and 368 each coordinate Zn(2+). A Mg(2+)-binding site is contributed by Asp-262. 2 disordered regions span residues 442 to 473 (VQPT…GDPN) and 494 to 534 (WKER…GNLD). Positions 453 to 462 (KNQPSFQWRQ) are enriched in polar residues. A phosphoserine mark is found at Ser-464 and Ser-512.

It belongs to the cyclic nucleotide phosphodiesterase family. PDE1 subfamily. As to quaternary structure, homodimer. Zn(2+) serves as cofactor. It depends on Mg(2+) as a cofactor. As to expression, expressed in central nervous system regions. Most abundant in basal ganglia. Also found in kidney papilla and adrenal medulla.

The protein resides in the cytoplasm. Its subcellular location is the cytosol. It catalyses the reaction a nucleoside 3',5'-cyclic phosphate + H2O = a nucleoside 5'-phosphate + H(+). It carries out the reaction 3',5'-cyclic GMP + H2O = GMP + H(+). The catalysed reaction is 3',5'-cyclic AMP + H2O = AMP + H(+). With respect to regulation, type I PDE are activated by the binding of calmodulin in the presence of Ca(2+). Cyclic nucleotide phosphodiesterase with a dual specificity for the second messengers cAMP and cGMP, which are key regulators of many important physiological processes. Has a preference for cGMP as a substrate. This Bos taurus (Bovine) protein is Dual specificity calcium/calmodulin-dependent 3',5'-cyclic nucleotide phosphodiesterase 1B.